We begin with the raw amino-acid sequence, 370 residues long: Translocating chain-associated membrane protein 2 (370 aa).

Residues 1–22 lie on the Cytoplasmic side of the membrane; sequence MAFRRRTKSYPLFSQEFIIHNH. A helical membrane pass occupies residues 23–43; it reads ADIGFCLVLCVLIGLMFEVTA. The Extracellular segment spans residues 44–75; the sequence is KTAFLFILPQYNISVPTADSETVHYHYGPKDL. N55 is a glycosylation site (N-linked (GlcNAc...) asparagine). The helical transmembrane segment at 76–96 threads the bilayer; the sequence is VTILFYVVITIIFHAVVQEYI. Over 97–119 the chain is Cytoplasmic; sequence LDKISKRLHLSKVKHSKFNESGQ. The region spanning 112–321 is the TLC domain; it reads SKFNESGQLL…HSQLRHWREY (210 aa). The chain crosses the membrane as a helical span at residues 120–140; sequence LLVFHLSAVAWCFYVIVTEGY. Residues 141–159 are Extracellular-facing; sequence LTNPRSLWEDYPHVYLSFQ. The helical transmembrane segment at 160–180 threads the bilayer; sequence VKFFYLGQLAYWLHSLPELYF. Residues 181-191 lie on the Cytoplasmic side of the membrane; the sequence is QKVRKEEVPRQ. Residues 192–209 form a helical membrane-spanning segment; it reads LQYICLYLLHITGAYLLN. At 210–214 the chain is on the extracellular side; that stretch reads LSRLG. Residues 215-235 form a helical membrane-spanning segment; that stretch reads LILLLLQYSTEALFHMARLFH. Residues 236 to 250 lie on the Cytoplasmic side of the membrane; that stretch reads FADENNERLFNAWAA. The chain crosses the membrane as a helical span at residues 251–271; that stretch reads VFGVTRLFILTLAVLTIGFGL. The Extracellular segment spans residues 272–287; sequence ARVENQVFDPEKGNFN. The helical transmembrane segment at 288–308 threads the bilayer; that stretch reads TLPCRLGMLLLVCVAQAWLMW. Topologically, residues 309 to 370 are cytoplasmic; the sequence is RFIHSQLRHW…SSRTKKLKSP (62 aa). The segment at 332 to 370 is disordered; it reads SAVPRPPAKLLKREPGYHENGVVKAENGTSSRTKKLKSP.

Belongs to the TRAM family. Interacts with COL1A1. Interacts with SERCA2B.

The protein resides in the membrane. Its function is as follows. Necessary for collagen type I synthesis. May couple the activity of the ER Ca(2+) pump SERCA2B with the activity of the translocon. This coupling may increase the local Ca(2+) concentration at the site of collagen synthesis, and a high Ca(2+) concentration may be necessary for the function of molecular chaperones involved in collagen folding. Required for proper insertion of the first transmembrane helix N-terminus of TM4SF20 into the ER lumen, may act as a ceramide sensor for regulated alternative translocation (RAT). The polypeptide is Translocating chain-associated membrane protein 2 (Tram2) (Mus musculus (Mouse)).